We begin with the raw amino-acid sequence, 415 residues long: Histidine--tRNA ligase (415 aa).

This sequence belongs to the class-II aminoacyl-tRNA synthetase family. Homodimer.

The protein resides in the cytoplasm. It catalyses the reaction tRNA(His) + L-histidine + ATP = L-histidyl-tRNA(His) + AMP + diphosphate + H(+). This chain is Histidine--tRNA ligase, found in Clostridium botulinum (strain Langeland / NCTC 10281 / Type F).